The chain runs to 368 residues: Galactoside 2-alpha-L-fucosyltransferase SEC1 (368 aa).

The segment at 1–20 (MWDMRAVAPQRPAAGHPRAG) is disordered. Residues 1–31 (MWDMRAVAPQRPAAGHPRAGWPRKLKTAATR) are Cytoplasmic-facing. The helical transmembrane segment at 32–52 (FWATCPSSSTVCFLFVIFAVS) threads the bilayer. The Lumenal segment spans residues 53 to 368 (TVFHCHRRLA…NLGQARESHP (316 aa)).

This sequence belongs to the glycosyltransferase 11 family. Kidney.

It is found in the golgi apparatus. Its subcellular location is the golgi stack membrane. It carries out the reaction a ganglioside GM1 + GDP-beta-L-fucose = a ganglioside Fuc-GM1 + GDP + H(+). It participates in protein modification; protein glycosylation. Functionally, catalyzes the transfer of alpha 1,2-linked fucose to ganglioside GM1 and galacto-N-biose. The protein is Galactoside 2-alpha-L-fucosyltransferase SEC1 of Bos taurus (Bovine).